We begin with the raw amino-acid sequence, 359 residues long: Probable dual-specificity RNA methyltransferase RlmN (359 aa).

Residue E91 is the Proton acceptor of the active site. The region spanning 97-329 (QHYGHSVCVT…KKNGVNCVVR (233 aa)) is the Radical SAM core domain. C104 and C340 are joined by a disulfide. [4Fe-4S] cluster contacts are provided by C111, C115, and C118. Residues 163–164 (GE), S195, 218–220 (SLH), and N296 each bind S-adenosyl-L-methionine. C340 acts as the S-methylcysteine intermediate in catalysis.

It belongs to the radical SAM superfamily. RlmN family. It depends on [4Fe-4S] cluster as a cofactor.

It is found in the cytoplasm. It carries out the reaction adenosine(2503) in 23S rRNA + 2 reduced [2Fe-2S]-[ferredoxin] + 2 S-adenosyl-L-methionine = 2-methyladenosine(2503) in 23S rRNA + 5'-deoxyadenosine + L-methionine + 2 oxidized [2Fe-2S]-[ferredoxin] + S-adenosyl-L-homocysteine. The enzyme catalyses adenosine(37) in tRNA + 2 reduced [2Fe-2S]-[ferredoxin] + 2 S-adenosyl-L-methionine = 2-methyladenosine(37) in tRNA + 5'-deoxyadenosine + L-methionine + 2 oxidized [2Fe-2S]-[ferredoxin] + S-adenosyl-L-homocysteine. In terms of biological role, specifically methylates position 2 of adenine 2503 in 23S rRNA and position 2 of adenine 37 in tRNAs. The sequence is that of Probable dual-specificity RNA methyltransferase RlmN from Streptococcus pyogenes serotype M18 (strain MGAS8232).